The sequence spans 384 residues: Alanine racemase (384 aa).

Lysine 39 functions as the Proton acceptor; specific for D-alanine in the catalytic mechanism. Residue lysine 39 is modified to N6-(pyridoxal phosphate)lysine. Position 136 (arginine 136) interacts with substrate. The Proton acceptor; specific for L-alanine role is filled by tyrosine 265. Position 312 (methionine 312) interacts with substrate.

Belongs to the alanine racemase family. Pyridoxal 5'-phosphate serves as cofactor.

The enzyme catalyses L-alanine = D-alanine. The protein operates within amino-acid biosynthesis; D-alanine biosynthesis; D-alanine from L-alanine: step 1/1. Functionally, catalyzes the interconversion of L-alanine and D-alanine. May also act on other amino acids. In Geobacillus kaustophilus (strain HTA426), this protein is Alanine racemase (alr).